The sequence spans 588 residues: Calcium/calmodulin-dependent protein kinase kinase 2 (588 aa).

Residues 1 to 14 (MSSCVSSQPSSNRA) are compositionally biased toward polar residues. Disordered regions lie at residues 1–33 (MSSC…SQKP) and 78–100 (GQEV…RKLS). S2 is modified (N-acetylserine). 5 positions are modified to phosphoserine: S100, S114, S129, S133, and S137. A compositionally biased stretch (low complexity) spans 128–139 (YSPVSSPQSSPR). The interval 128–149 (YSPVSSPQSSPRLPRRPTVESH) is disordered. The Protein kinase domain maps to 165–446 (YTLKDEIGKG…VPEIKLHPWV (282 aa)). ATP is bound by residues 171–179 (IGKGSYGVV) and K194. The segment at 204-226 (QAGFPRRPPPRGTRPAPGGCIQP) is RP domain. Positions 205-225 (AGFPRRPPPRGTRPAPGGCIQ) are disordered. D312 functions as the Proton acceptor in the catalytic mechanism. An autoinhibitory domain region spans residues 472–477 (ENSVKH). The interval 475 to 500 (VKHIPSLATVILVKTMIRKRSFGNPF) is calmodulin-binding. P479, S495, S511, T522, and S572 each carry phosphoserine. Positions 497 to 588 (GNPFEGSRRE…LRPEEAMEPE (92 aa)) are disordered. Positions 521-536 (PTRECESLSELKEARQ) are enriched in basic and acidic residues. Residues 579–588 (LRPEEAMEPE) show a composition bias toward basic and acidic residues.

Belongs to the protein kinase superfamily. Ser/Thr protein kinase family. Interacts with calmodulin. In terms of processing, autophosphorylated and phosphorylated by PKA. Each isoform may show a different pattern of phosphorylation. In terms of tissue distribution, ubiquitously expressed with higher levels in the brain. Intermediate levels are detected in spleen, prostate, thyroid and leukocytes. The lowest level is in lung.

The protein resides in the nucleus. It is found in the cytoplasm. It localises to the cell projection. Its subcellular location is the neuron projection. The enzyme catalyses L-seryl-[protein] + ATP = O-phospho-L-seryl-[protein] + ADP + H(+). It carries out the reaction L-threonyl-[protein] + ATP = O-phospho-L-threonyl-[protein] + ADP + H(+). Activated by Ca(2+)/calmodulin. Binding of calmodulin may relieve intrasteric autoinhibition. Autophosphorylation does not alter activity or regulation by Ca(2+)/calmodulin. In part, activity is independent on Ca(2+)/calmodulin. Functionally, calcium/calmodulin-dependent protein kinase belonging to a proposed calcium-triggered signaling cascade involved in a number of cellular processes. Isoform 1, isoform 2 and isoform 3 phosphorylate CAMK1 and CAMK4. Isoform 3 phosphorylates CAMK1D. Isoform 4, isoform 5 and isoform 6 lacking part of the calmodulin-binding domain are inactive. Efficiently phosphorylates 5'-AMP-activated protein kinase (AMPK) trimer, including that consisting of PRKAA1, PRKAB1 and PRKAG1. This phosphorylation is stimulated in response to Ca(2+) signals. Seems to be involved in hippocampal activation of CREB1. May play a role in neurite growth. Isoform 3 may promote neurite elongation, while isoform 1 may promoter neurite branching. The protein is Calcium/calmodulin-dependent protein kinase kinase 2 (CAMKK2) of Homo sapiens (Human).